Here is a 268-residue protein sequence, read N- to C-terminus: Putative esterase/lipase 2 (268 aa).

H29 is an active-site residue. The active-site Charge relay system is S98.

The protein belongs to the lipase/esterase LIP3/BchO family.

The polypeptide is Putative esterase/lipase 2 (Mycoplasma genitalium (strain ATCC 33530 / DSM 19775 / NCTC 10195 / G37) (Mycoplasmoides genitalium)).